The chain runs to 247 residues: DNA polymerase sliding clamp (247 aa).

It belongs to the PCNA family. In terms of assembly, homotrimer. The subunits circularize to form a toroid; DNA passes through its center. Replication factor C (RFC) is required to load the toroid on the DNA.

Functionally, sliding clamp subunit that acts as a moving platform for DNA processing. Responsible for tethering the catalytic subunit of DNA polymerase and other proteins to DNA during high-speed replication. In Thermofilum pendens (strain DSM 2475 / Hrk 5), this protein is DNA polymerase sliding clamp.